The sequence spans 66 residues: Cold shock protein 2 (66 aa).

Residues 4–63 (GTVKWFNADKGFGFITGEDGTDVFVHFSAIQTDGFKTLDEGQKVTYDEEQGDRGPQATNV) form the CSD domain.

The protein localises to the cytoplasm. The protein is Cold shock protein 2 (cspL) of Lactiplantibacillus plantarum (strain ATCC BAA-793 / NCIMB 8826 / WCFS1) (Lactobacillus plantarum).